Reading from the N-terminus, the 184-residue chain is Putative pre-16S rRNA nuclease (184 aa).

The tract at residues 1 to 23 (MFSSQHRLLYQPSGPDLSKNLDP) is disordered.

Belongs to the YqgF nuclease family.

Its subcellular location is the cytoplasm. Could be a nuclease involved in processing of the 5'-end of pre-16S rRNA. This Mycobacterium leprae (strain Br4923) protein is Putative pre-16S rRNA nuclease.